Reading from the N-terminus, the 381-residue chain is Neuropeptide Y receptor type 2 (381 aa).

A disordered region spans residues 1-37 (MGPVGAEADENQTVEVKVEPYGPGHTTPRGELPPDPE). At 1-51 (MGPVGAEADENQTVEVKVEPYGPGHTTPRGELPPDPEPELIDSTKLVEVQV) the chain is on the extracellular side. An N-linked (GlcNAc...) asparagine glycan is attached at asparagine 11. Residues 52–72 (ILILAYCSIILLGVVGNSLVI) form a helical membrane-spanning segment. Topologically, residues 73–86 (HVVIKFKSMRTVTN) are cytoplasmic. Residues 87–107 (FFIANLAVADLLVNTLCLPFT) traverse the membrane as a helical segment. The Extracellular portion of the chain corresponds to 108–124 (LTYTLMGEWKMGPVLCH). Cysteine 123 and cysteine 203 are joined by a disulfide. Residues 125 to 145 (LVPYAQGLAVQVSTITLTVIA) traverse the membrane as a helical segment. The Cytoplasmic segment spans residues 146 to 165 (LDRHRCIVYHLESKISKRIS). A helical transmembrane segment spans residues 166–186 (FLIIGLAWGISALLASPLAIF). Over 187 to 216 (REYSLIEIIPDFEIVACTEKWPGEEKSVYG) the chain is Extracellular. A helical transmembrane segment spans residues 217-237 (TVYSLSTLLILYVLPLGIISF). Residues 238 to 268 (SYTRIWSKLRNHVSPGAASDHYHQRRHKMTK) are Cytoplasmic-facing. The chain crosses the membrane as a helical span at residues 269 to 289 (MLVCVVVVFAVSWLPLHAFQL). The Extracellular portion of the chain corresponds to 290–304 (AVDIDSHVLDLKEYK). A helical membrane pass occupies residues 305–325 (LIFTVFHIIAMCSTFANPLLY). The Cytoplasmic portion of the chain corresponds to 326–381 (GWMNSNYRKAFLSAFRCEQRLDAIHSEVSMTFKAKKNLEVKKNNGPTDSFSEATNV). Cysteine 342 carries the S-palmitoyl cysteine lipid modification.

It belongs to the G-protein coupled receptor 1 family.

It localises to the cell membrane. Receptor for neuropeptide Y and peptide YY. In Mus musculus (Mouse), this protein is Neuropeptide Y receptor type 2 (Npy2r).